Reading from the N-terminus, the 439-residue chain is uncharacterized protein (439 aa).

The N-terminal stretch at 1 to 22 (MWVALKRFGFLSGLLALTVLSA) is a signal peptide. Cysteine 23 is lipidated: N-palmitoyl cysteine. The S-diacylglycerol cysteine moiety is linked to residue cysteine 23.

It belongs to the MG067/MG068/MG395 family.

Its subcellular location is the cell membrane. This is an uncharacterized protein from Mycoplasma pneumoniae (strain ATCC 29342 / M129 / Subtype 1) (Mycoplasmoides pneumoniae).